The chain runs to 115 residues: Rapid alkalinization factor (115 aa).

The N-terminal stretch at M1 to A23 is a signal peptide. Positions G24–L66 are cleaved as a propeptide — removed in mature form. 2 disulfides stabilise this stretch: C84-C94 and C107-C113.

In terms of processing, proteolytically cleaved, probably by S1P, a subtilisin-like serine protease (subtilase).

The protein localises to the secreted. Cell signaling peptide that may regulate plant stress, growth, and development. Mediates a rapid alkalinization of extracellular space by mediating a transient increase in the cytoplasmic Ca(2+) concentration leading to a calcium-dependent signaling events through a cell surface receptor and a concomitant activation of some intracellular mitogen-activated protein kinases. Prevents root growth and seedling development in heterologous system. The protein is Rapid alkalinization factor (RALF) of Nicotiana tabacum (Common tobacco).